A 214-amino-acid polypeptide reads, in one-letter code: pH-sensitive calcium channel (214 aa).

Over 1-15 (MQATVHESKQSIMQR) the chain is Cytoplasmic. A helical membrane pass occupies residues 16 to 37 (ILTVFVFTLLIATVGLFIGQFV). Topologically, residues 38 to 44 (PVALMLP) are extracellular. Residues 45–59 (LSILEVAMIILAFWM) traverse the membrane as a helical segment. Over 60 to 66 (RRRKAVG) the chain is Cytoplasmic. Residues 67 to 86 (YAFVYTFAFVSGITLFPIVS) traverse the membrane as a helical segment. Topologically, residues 87–95 (HYASIAGAY) are extracellular. A helical transmembrane segment spans residues 96-117 (VVLEAFGSTFVIFAVLGTIGAK). Topologically, residues 118 to 122 (MKKDL) are cytoplasmic. Residues 123 to 146 (SFLWSFLLVAVLALAVVGIFNIFS) traverse the membrane as a helical segment. Topologically, residues 147-151 (PLNSA) are extracellular. The helical transmembrane segment at 152-175 (AMMAYSVIGTIVFSLYILYDLNQI) threads the bilayer. Residues 176–185 (KHRHITEDLI) lie on the Cytoplasmic side of the membrane. The chain crosses the membrane as a helical span at residues 186–207 (PVMALSLYLDFINLFINLLRFF). Topologically, residues 208 to 214 (GILSSDD) are extracellular.

This sequence belongs to the BI1 family. In terms of assembly, monomer.

It localises to the cell membrane. It catalyses the reaction Ca(2+)(in) = Ca(2+)(out). Its activity is regulated as follows. The calcium-release activity is mediated by two factors: pH and transmembrane ion gradient. It was proposed, based on an MD simulation, that the conserved aspartyl dyad (Asp-171-Asp-195) regulates Ca(2+) binding, pH sensing, and the channel pore opening and closing, and that protonation of Asp-171 probably weakens its interaction with Arg-60, facilitating the opening of the channel. Another study using nanodiscs suggests that Asp-171 is not a pH sensor regulating the pore dynamics; instead, it is only involved in the gating of calcium ions. When crystallized in detergents at different pH conditions, the transition between open and closed conformations is regulated by pH. Ca(2+) binding is inhibited by Na(+), K(+), Li(+), Yb(3+) and Lu(3+), but not by Mg(2+) and Mn(2+). Functionally, calcium channel that probably plays a role in the regulation of calcium homeostasis. Uptakes calcium ions and mediates calcium flux in proteoliposomes in a pH-dependent manner. When expressed in E.coli in the presence of high extracellular calcium concentrations, shows calcium-leak activity, increasing intracellular calcium concentration. It can also mediate Ca(2+) flux from the endoplamic reticulum (ER) when expressed in permeabilized mammalian cells. Calcium transport activity is also detected in ER-like lipid vesicles. This Bacillus subtilis (strain 168) protein is pH-sensitive calcium channel.